The chain runs to 702 residues: Dissimilatory sulfite reductase MccA (702 aa).

The first 39 residues, 1–39, serve as a signal peptide directing secretion; it reads MLSGWSVLKGGNMKYWDKALLSLFMCVSTLSIAATHAVA. 4 residues coordinate heme c: C155, C158, H159, and H171. Positions 220 and 297 each coordinate substrate. C314, C317, H318, C351, C354, H355, H360, C372, C375, and H376 together coordinate heme c. Residue R378 participates in substrate binding. C411 contacts Cu(+). Heme c is bound by residues H423, C430, C433, H434, H437, C474, C477, H478, H491, C496, C499, and H500. C507 is a Cu(+) binding site. 5 residues coordinate heme c: H528, C574, C590, H591, and H675.

It belongs to the multiheme cytochrome c family. In terms of assembly, homotrimer. The cofactor is Cu(+). It depends on heme c as a cofactor.

The protein localises to the periplasm. The enzyme catalyses [protein]-disulfide + hydrogen sulfide + 2 A + 3 H2O = [protein]-dithiol + sulfite + 2 AH2 + H(+). It participates in sulfur metabolism; sulfite reduction. Its function is as follows. Respiratory sulfite reductase that catalyzes the reduction of sulfite to sulfide in a single step, consuming six electrons in the process. Required for sulfite respiration under anaerobic growth conditions. Has only marginal activity with nitrite. In Wolinella succinogenes (strain ATCC 29543 / DSM 1740 / CCUG 13145 / JCM 31913 / LMG 7466 / NCTC 11488 / FDC 602W) (Vibrio succinogenes), this protein is Dissimilatory sulfite reductase MccA.